The chain runs to 116 residues: Protein TRACHEARY ELEMENT DIFFERENTIATION-RELATED 6 (116 aa).

Residues methionine 1 to valine 24 are Extracellular-facing. A helical membrane pass occupies residues phenylalanine 25–isoleucine 45. At lysine 46–serine 116 the chain is on the cytoplasmic side.

In terms of assembly, interacts with CESA7/IRX3, a subunit of the secondary cell wall (SCW)-related cellulose synthase complex. As to expression, expressed preferentially in differentiating vessel elements in seedlings.

Its subcellular location is the cell membrane. The protein localises to the secreted. It is found in the cell wall. Its function is as follows. Involved in the secondary cell wall (SCW) formation of vessel elements (e.g. protoxylem and metaxylem), thus promoting tracheary element (TE) differentiation. In Arabidopsis thaliana (Mouse-ear cress), this protein is Protein TRACHEARY ELEMENT DIFFERENTIATION-RELATED 6.